The sequence spans 315 residues: 4-diphosphocytidyl-2-C-methyl-D-erythritol kinase (315 aa).

Residue lysine 26 is part of the active site. An ATP-binding site is contributed by 111–121 (PLAGGLAGGSA). Aspartate 153 is an active-site residue.

It belongs to the GHMP kinase family. IspE subfamily.

The catalysed reaction is 4-CDP-2-C-methyl-D-erythritol + ATP = 4-CDP-2-C-methyl-D-erythritol 2-phosphate + ADP + H(+). The protein operates within isoprenoid biosynthesis; isopentenyl diphosphate biosynthesis via DXP pathway; isopentenyl diphosphate from 1-deoxy-D-xylulose 5-phosphate: step 3/6. Its function is as follows. Catalyzes the phosphorylation of the position 2 hydroxy group of 4-diphosphocytidyl-2C-methyl-D-erythritol. The sequence is that of 4-diphosphocytidyl-2-C-methyl-D-erythritol kinase from Salinispora tropica (strain ATCC BAA-916 / DSM 44818 / JCM 13857 / NBRC 105044 / CNB-440).